The primary structure comprises 415 residues: MEKLQDQYSFLCSENIRKTNPLILNILQKLDEEIEKRPKEKITVNIAGNSRLDSGQRITSEDFWLLSKALRNHPCIGGVDVRYNLIGDVGAYYAAKLLQKQPNITYLNLMFNDIGPEGGELIAKALQKNKTLKYLRMTGNKIENTGGMLFAAMLQMNSSLEKLDLGDCDLGLQSVIAFSTVLTQNKAIKGINLNRPILYGEQEESTVHIGHMSKQNHVLVELHMCKHGMKNYGIQQLCNALHSNSTLRYLDVSCNKITRDGMVFLADVLKSNSTLEVLDLSFNRIENAGAKYLSETLTSHNRSLKALSVVSNKIEGEGLVALSQSMNTNLVLSNIYIWGNKFDEDTCVAYSNLIESGRLKPENTDVEPYVVDEHIYLSEVSNGLKRHYYWTPTYGECYVPSSSAGFALVPVGERL.

LRR repeat units lie at residues 246-272 (TLRY…LKSN) and 274-296 (TLEV…LSET).

Interacts with NPM1 and NCL.

The protein localises to the nucleus. It is found in the nucleolus. The protein resides in the cytoplasm. Its function is as follows. Highly expressed in stem cells where it may be involved in regulation of pluripotency. In embryonic stem cells (ESCs), important for normal expression of the pluripotency regulators POU5F1/OCT4 and KLF4. Also important for expression of the ectodermal marker gene NES and the endodermal marker gene GATA4. Promotes stem cell proliferation in vitro. This is Leucine-rich repeat-containing protein 34 (Lrrc34) from Rattus norvegicus (Rat).